Consider the following 408-residue polypeptide: uncharacterized protein (408 aa).

Residues 49–77 (PRSSPEVQRKATAGENSEVGSPESSLSTS) are disordered. Positions 62 to 77 (GENSEVGSPESSLSTS) are enriched in polar residues. An F-box domain is found at 124-170 (SFEFMQLPDTDICQIMSFLDAQSLLNLSQTCSHLRQLCLAHEDNAGK).

This is an uncharacterized protein from Caenorhabditis elegans.